Consider the following 594-residue polypeptide: UV-stimulated scaffold protein A homolog (594 aa).

The segment at 24-170 is VHS-like; it reads RKNLNRFIRE…VTLKKTKFVD (147 aa). Residues 170-198 adopt a coiled-coil conformation; the sequence is DYENGAKKIEAERKRKKILEERKMKMIEN. The segment at 466 to 493 adopts a UVSSA-type zinc-finger fold; sequence RKVCLAKMKSGKLCPRKDYYTCPLHGKI. C469, C479, C487, and H490 together coordinate Zn(2+). A coiled-coil region spans residues 503–540; it reads INEEDRLEENYRKEQNHLKEADKIRQMIEKEYESKTKR. Positions 533-558 are disordered; the sequence is EYESKTKRRKKHDVDTTASEDVRNRL. The span at 544 to 558 shows a compositional bias: basic and acidic residues; it reads HDVDTTASEDVRNRL.

This sequence belongs to the UVSSA family.

Its subcellular location is the chromosome. Factor involved in transcription-coupled nucleotide excision repair (TC-NER) in response to UV damage. TC-NER allows RNA polymerase II-blocking lesions to be rapidly removed from the transcribed strand of active genes. This Caenorhabditis elegans protein is UV-stimulated scaffold protein A homolog.